Here is a 101-residue protein sequence, read N- to C-terminus: Urease subunit beta (101 aa).

This sequence belongs to the urease beta subunit family. In terms of assembly, heterotrimer of UreA (gamma), UreB (beta) and UreC (alpha) subunits. Three heterotrimers associate to form the active enzyme.

It is found in the cytoplasm. It catalyses the reaction urea + 2 H2O + H(+) = hydrogencarbonate + 2 NH4(+). It functions in the pathway nitrogen metabolism; urea degradation; CO(2) and NH(3) from urea (urease route): step 1/1. The protein is Urease subunit beta of Cereibacter sphaeroides (strain ATCC 17029 / ATH 2.4.9) (Rhodobacter sphaeroides).